The sequence spans 172 residues: Ribosome maturation factor RimM (172 aa).

A PRC barrel domain is found at 94 to 167 (EGSYYYKDII…VAHVIVPEGL (74 aa)).

This sequence belongs to the RimM family. In terms of assembly, binds ribosomal protein uS19.

The protein resides in the cytoplasm. Functionally, an accessory protein needed during the final step in the assembly of 30S ribosomal subunit, possibly for assembly of the head region. Essential for efficient processing of 16S rRNA. May be needed both before and after RbfA during the maturation of 16S rRNA. It has affinity for free ribosomal 30S subunits but not for 70S ribosomes. The polypeptide is Ribosome maturation factor RimM (Lacticaseibacillus paracasei (strain ATCC 334 / BCRC 17002 / CCUG 31169 / CIP 107868 / KCTC 3260 / NRRL B-441) (Lactobacillus paracasei)).